A 59-amino-acid chain; its full sequence is MAVQQNKKSPSKRGMHRAHDFLTAPATAVEATTGEAHLRHHISPNGYYRGRKVVKTKND.

The segment at 35 to 59 is disordered; sequence EAHLRHHISPNGYYRGRKVVKTKND. The segment covering 49 to 59 has biased composition (basic residues); it reads RGRKVVKTKND.

Belongs to the bacterial ribosomal protein bL32 family.

In Polynucleobacter asymbioticus (strain DSM 18221 / CIP 109841 / QLW-P1DMWA-1) (Polynucleobacter necessarius subsp. asymbioticus), this protein is Large ribosomal subunit protein bL32.